Reading from the N-terminus, the 963-residue chain is Spliceosome associated factor 3, U4/U6 recycling protein (963 aa).

Over residues 1-11 (MATAAETSASE) the composition is skewed to low complexity. Disordered stretches follow at residues 1 to 36 (MATAAETSASEPEAESKAGPKADGEEDEVKAARTRR) and 50 to 90 (TMGP…YDEE). N-acetylalanine is present on alanine 2. Residues 2–351 (ATAAETSASE…LVPDLWIRYS (350 aa)) form a mediates interaction with PRPF3 region. Phosphoserine occurs at positions 10 and 16. Residues 14 to 23 (AESKAGPKAD) are compositionally biased toward basic and acidic residues. A coiled-coil region spans residues 21–46 (KADGEEDEVKAARTRRKVLSRAVAAA). Residues 57 to 69 (QQEEGVSESDGDE) are compositionally biased toward acidic residues. Positions 82-110 (EYEWEYDEEEEKNQLEIERLEEQLSINVY) form a coiled coil. 8 HAT repeats span residues 126–158 (GELTKVRMARQKMSEIFPLTEELWLEWLHDEIS), 164–195 (LDREHVYDLFEKAVKDYICPNIWLEYGQYSVG), 201–237 (GGLEKVRSVFERALSSVGLHMTKGLALWEAYREFESA), 242–275 (ARLEKVHSLFRRQLAIPLYDMEATFAEYEEWSED), 324–356 (GDPARIQLIFERALVENCLVPDLWIRYSQYLDR), 359–391 (KVKDLVLSVHNRAIRNCPWTVALWSRYLLAMER), 394–430 (VDHQVISVTFEKALNAGFIQATDYVEIWQAYLDYLRR), and 487–520 (NNMQKARELWDSIMTRGNAKYANMWLEYYNLERA). Serine 215 is modified (phosphoserine). A required for interaction with USP4 region spans residues 487–520 (NNMQKARELWDSIMTRGNAKYANMWLEYYNLERA). Residues 537-953 (CTSDYPEHVC…AATEAPKMSN (417 aa)) form a necessary and sufficient for U6 snRNA binding region. Positions 559–619 (LEDWDIAVQK…ALKKKKKIRG (61 aa)) form a coiled coil. Positions 590 to 601 (LVQQEEEKAEQR) are enriched in basic and acidic residues. The segment at 590-694 (LVQQEEEKAE…AASLKRDMPK (105 aa)) is disordered. The tract at residues 600–670 (QRKRARAEKK…EVAAGPAGKC (71 aa)) is required for nuclear localization. The Nuclear localization signal motif lies at 601–608 (RKRARAEK). Basic residues predominate over residues 602–617 (KRARAEKKALKKKKKI). Over residues 626–639 (DEDDEKEWGDDEEE) the composition is skewed to acidic residues. Serine 650 is subject to Phosphoserine. Residue threonine 657 is modified to Phosphothreonine. The span at 677–694 (PPSKQKEKAASLKRDMPK) shows a compositional bias: basic and acidic residues. An RRM 1 domain is found at 704–782 (ITVFVSNLPY…RPMFVSPCVD (79 aa)). Phosphoserine occurs at positions 769, 795, and 852. One can recognise an RRM 2 domain in the interval 801-878 (HKLFISGLPF…NIIKVAISNP (78 aa)). The tract at residues 878-898 (PPQRKVPEKPETRKAPGGPML) is disordered. Positions 882 to 891 (KVPEKPETRK) are enriched in basic and acidic residues. Omega-N-methylarginine is present on arginine 906. The tract at residues 920-948 (LQRPSAAAPQAENGPAAAPAVAAPAATEA) is disordered. Residues 925–948 (AAAPQAENGPAAAPAVAAPAATEA) show a composition bias toward low complexity.

Component of the 7SK snRNP complex at least composed of P-TEFb (composed of CDK9 and CCNT1/cyclin-T1), HEXIM1, HEXIM2, BCDIN3, SART3 proteins and 7SK and U6 snRNAs. Interacts with AGO1 and AGO2. Interacts with PRPF3 and USP4; the interaction with PRPF3 is direct and recruits USP4 to its substrate PRPF3. Interacts with USP15; the interaction is direct. Interacts with HIV-1 Tat. Ubiquitously expressed.

It is found in the nucleus. It localises to the nucleoplasm. Its subcellular location is the cajal body. The protein localises to the nucleus speckle. The protein resides in the cytoplasm. Functionally, U6 snRNP-binding protein that functions as a recycling factor of the splicing machinery. Promotes the initial reassembly of U4 and U6 snRNPs following their ejection from the spliceosome during its maturation. Also binds U6atac snRNPs and may function as a recycling factor for U4atac/U6atac spliceosomal snRNP, an initial step in the assembly of U12-type spliceosomal complex. The U12-type spliceosomal complex plays a role in the splicing of introns with non-canonical splice sites. May also function as a substrate-targeting factor for deubiquitinases like USP4 and USP15. Recruits USP4 to ubiquitinated PRPF3 within the U4/U5/U6 tri-snRNP complex, promoting PRPF3 deubiquitination and thereby regulating the spliceosome U4/U5/U6 tri-snRNP spliceosomal complex disassembly. May also recruit the deubiquitinase USP15 to histone H2B and mediate histone deubiquitination, thereby regulating gene expression and/or DNA repair. May play a role in hematopoiesis probably through transcription regulation of specific genes including MYC. In terms of biological role, regulates Tat transactivation activity through direct interaction. May be a cellular factor for HIV-1 gene expression and viral replication. In Homo sapiens (Human), this protein is Spliceosome associated factor 3, U4/U6 recycling protein.